The chain runs to 1474 residues: Alpha-2-macroglobulin-P (1474 aa).

The N-terminal stretch at 1-32 is a signal peptide; sequence MGKRWLPSLALLPLPPPLLLLLLLLLPTNASA. A disulfide bridge links Cys55 with Cys93. Residues Asn62, Asn77, and Asn253 are each glycosylated (N-linked (GlcNAc...) asparagine). 2 disulfides stabilise this stretch: Cys257–Cys305 and Cys275–Cys293. Asn402 carries N-linked (GlcNAc...) asparagine glycosylation. Intrachain disulfides connect Cys476–Cys569, Cys601–Cys771, and Cys650–Cys697. Residues 623-752 form a bait region region; that stretch reads LVYDLLPVKD…LVIVDSTGVA (130 aa). Residues Asn654 and Asn774 are each glycosylated (N-linked (GlcNAc...) asparagine). Disulfide bonds link Cys821–Cys849, Cys847–Cys883, Cys921–Cys1321, Cys1079–Cys1127, and Cys1352–Cys1467. Asn869 carries N-linked (GlcNAc...) asparagine glycosylation. The segment at residues 972–975 is a cross-link (isoglutamyl cysteine thioester (Cys-Gln)); the sequence is CGEQ. Asn991 carries N-linked (GlcNAc...) asparagine glycosylation. N-linked (GlcNAc...) asparagine glycosylation is present at Asn1366.

The protein belongs to the protease inhibitor I39 (alpha-2-macroglobulin) family. In terms of assembly, homotetramer; disulfide-linked. In terms of tissue distribution, expressed in uterus, mesometrial lymphoid aggregate and mammary tissue during pregnancy. Expressed in ovary, testis and kidney. Low level expression in heart. Not expressed in liver.

It is found in the secreted. Functionally, is able to inhibit all four classes of proteinases by a unique 'trapping' mechanism. This protein has a peptide stretch, called the 'bait region' which contains specific cleavage sites for different proteinases. When a proteinase cleaves the bait region, a conformational change is induced in the protein which traps the proteinase. The entrapped enzyme remains active against low molecular weight substrates (activity against high molecular weight substrates is greatly reduced). Following cleavage in the bait region a thioester bond is hydrolyzed and mediates the covalent binding of the protein to the proteinase. This is Alpha-2-macroglobulin-P from Mus musculus (Mouse).